The chain runs to 237 residues: tRNA (guanine-N(7)-)-methyltransferase (237 aa).

Residues glutamate 65, glutamate 90, aspartate 117, and aspartate 140 each coordinate S-adenosyl-L-methionine. Aspartate 140 is an active-site residue. Residues lysine 144, aspartate 176, and 212-215 (TKFE) each bind substrate. Positions 197-217 (TCGPRQFSPRGERPETKFERR) are disordered. Over residues 206–217 (RGERPETKFERR) the composition is skewed to basic and acidic residues.

This sequence belongs to the class I-like SAM-binding methyltransferase superfamily. TrmB family.

It carries out the reaction guanosine(46) in tRNA + S-adenosyl-L-methionine = N(7)-methylguanosine(46) in tRNA + S-adenosyl-L-homocysteine. The protein operates within tRNA modification; N(7)-methylguanine-tRNA biosynthesis. In terms of biological role, catalyzes the formation of N(7)-methylguanine at position 46 (m7G46) in tRNA. In Alkalilimnicola ehrlichii (strain ATCC BAA-1101 / DSM 17681 / MLHE-1), this protein is tRNA (guanine-N(7)-)-methyltransferase.